A 611-amino-acid chain; its full sequence is Chaperone protein HtpG (611 aa).

Positions 1 to 326 are a; substrate-binding; sequence MSETLERHAF…TEDLPLNVSR (326 aa). A b region spans residues 327–536; the sequence is EMLQATPVLA…SGGPDLQMQR (210 aa). Positions 537 to 611 are c; sequence LLRRAGRGFG…RVAAALAAQA (75 aa).

Belongs to the heat shock protein 90 family. In terms of assembly, homodimer.

It localises to the cytoplasm. Functionally, molecular chaperone. Has ATPase activity. The chain is Chaperone protein HtpG from Methylobacterium sp. (strain 4-46).